The sequence spans 1017 residues: Pikachurin (1017 aa).

Residues 1-24 (MDLIRGVLLRLLLLASSLGPGAVS) form the signal peptide. Fibronectin type-III domains lie at 37-136 (PPLD…TLSQ) and 144-239 (APQQ…TLCP). N-linked (GlcNAc...) asparagine glycosylation occurs at Asn-47. One can recognise an EGF-like 1 domain in the interval 343-381 (FDMPCDETLCSADSFCVNDYTWGGSRCQCTLGKGGESCS). Intrachain disulfides connect Cys-347/Cys-358, Cys-352/Cys-369, Cys-371/Cys-380, Cys-534/Cys-564, Cys-569/Cys-580, Cys-574/Cys-590, Cys-592/Cys-601, Cys-788/Cys-799, Cys-793/Cys-808, Cys-810/Cys-819, and Cys-987/Cys-1014. One can recognise a Laminin G-like 1 domain in the interval 386-564 (IQYPQFFGHS…ALSGADVGEC (179 aa)). 2 EGF-like domains span residues 565–602 (SSGICDEASCIHGGTCTAIKADSYICLCPLGFKGRHCE) and 784–820 (AAHPCVRAPCAHGGSCRPRKEGYDCDCPLGFEGLHCQ). Residues 609–788 (IPQFRESLRS…VNVENAAHPC (180 aa)) form the Laminin G-like 2 domain. In terms of domain architecture, Laminin G-like 3 spans 835–1014 (IEIPQFIGRS…AVDGKNINTC (180 aa)).

Interacts with DAG1 alpha-dystroglycan. Interacts with GPR158 and GPR179; transsynaptic interaction is required for synaptic organization of photoreceptor cells. Post-translationally, O-glycosylated; contains chondroitin sulfate and heparan sulfate.

It localises to the secreted. The protein localises to the extracellular space. Its subcellular location is the extracellular matrix. The protein resides in the synaptic cleft. It is found in the presynaptic active zone. Its function is as follows. Involved in both the retinal photoreceptor ribbon synapse formation and physiological functions of visual perception. Plays a key role in the synaptic organization of photoreceptors by mediating transsynaptic interaction between alpha-dystroglycan and GPR179 on the postsynaptic membrane. Necessary for proper bipolar dendritic tip apposition to the photoreceptor ribbon synapse. Promotes matrix assembly and cell adhesiveness. The sequence is that of Pikachurin (EGFLAM) from Homo sapiens (Human).